A 453-amino-acid polypeptide reads, in one-letter code: Tryptophan biosynthesis protein TrpCF (453 aa).

Residues 1-257 are indole-3-glycerol phosphate synthase; the sequence is MQDTTLKKII…TAVRSIIFGD (257 aa). The tract at residues 258 to 453 is N-(5'-phosphoribosyl)anthranilate isomerase; it reads NKVCGLTRSI…KSIFQKLRYG (196 aa).

This sequence in the N-terminal section; belongs to the TrpC family. In the C-terminal section; belongs to the TrpF family. Monomer.

The catalysed reaction is N-(5-phospho-beta-D-ribosyl)anthranilate = 1-(2-carboxyphenylamino)-1-deoxy-D-ribulose 5-phosphate. It carries out the reaction 1-(2-carboxyphenylamino)-1-deoxy-D-ribulose 5-phosphate + H(+) = (1S,2R)-1-C-(indol-3-yl)glycerol 3-phosphate + CO2 + H2O. It participates in amino-acid biosynthesis; L-tryptophan biosynthesis; L-tryptophan from chorismate: step 3/5. It functions in the pathway amino-acid biosynthesis; L-tryptophan biosynthesis; L-tryptophan from chorismate: step 4/5. Functionally, bifunctional enzyme that catalyzes two sequential steps of tryptophan biosynthetic pathway. The first reaction is catalyzed by the isomerase, coded by the TrpF domain; the second reaction is catalyzed by the synthase, coded by the TrpC domain. In Buchnera aphidicola subsp. Acyrthosiphon pisum (strain APS) (Acyrthosiphon pisum symbiotic bacterium), this protein is Tryptophan biosynthesis protein TrpCF (trpC).